We begin with the raw amino-acid sequence, 173 residues long: MMKRDTKEQIAQEIAEKFQKSQGFYFTEFQGLDVQKMSQLRLEFRKAGIEYRVVKNTLIKKALKDAADVDKLAAGLKNTTAVAFAYDDPIAPAKIIKKFSKDNEALKFKMASIDGQVFGSDSLPQLSEMLSKTENIGRLAGLLNNMVASVPMVMNAVMRNLVSVIDQVGKLEK.

Belongs to the universal ribosomal protein uL10 family. In terms of assembly, part of the ribosomal stalk of the 50S ribosomal subunit. The N-terminus interacts with L11 and the large rRNA to form the base of the stalk. The C-terminus forms an elongated spine to which L12 dimers bind in a sequential fashion forming a multimeric L10(L12)X complex.

Its function is as follows. Forms part of the ribosomal stalk, playing a central role in the interaction of the ribosome with GTP-bound translation factors. The protein is Large ribosomal subunit protein uL10 of Chlorobaculum tepidum (strain ATCC 49652 / DSM 12025 / NBRC 103806 / TLS) (Chlorobium tepidum).